The sequence spans 379 residues: Retron Se72 reverse transcriptase (379 aa).

The 245-residue stretch at 1–245 (MNKPRFNGTP…SKLSVTGLWV (245 aa)) folds into the Reverse transcriptase domain. The Mg(2+) site is built by D109, D188, and D189.

It belongs to the bacterial reverse transcriptase family.

The enzyme catalyses DNA(n) + a 2'-deoxyribonucleoside 5'-triphosphate = DNA(n+1) + diphosphate. In terms of biological role, reverse transcriptase (RT) component of antiviral defense system retron Se72, composed of a non-coding RNA (ncRNA), this reverse transcriptase (RT) and the following cold shock-like protein. Expression of retron Se72 confers protection against bacteriophage lambda. At multiplicity of infection (MOI) of 0.02 cultures slow growth when infected with lambda but do not collapse, at MOI 2 cultures enter growth stasis. Responsible for synthesis of msDNA (a branched molecule with RNA linked by a 2',5'-phosphodiester bond to ssDNA). The retron transcript serves as primer (from a conserved internal G residue) and template for the reaction, and codes for the RT. The DNA segment is predicted to be 72 bases long. This chain is Retron Se72 reverse transcriptase, found in Salmonella heidelberg (strain 579083-10).